The primary structure comprises 699 residues: Elongation factor G (699 aa).

Positions 8–290 (NRYRNIGICA…AVIEFLPAPD (283 aa)) constitute a tr-type G domain. GTP-binding positions include 17-24 (AHVDAGKT), 88-92 (DTPGH), and 142-145 (NKMD).

Belongs to the TRAFAC class translation factor GTPase superfamily. Classic translation factor GTPase family. EF-G/EF-2 subfamily.

It localises to the cytoplasm. Functionally, catalyzes the GTP-dependent ribosomal translocation step during translation elongation. During this step, the ribosome changes from the pre-translocational (PRE) to the post-translocational (POST) state as the newly formed A-site-bound peptidyl-tRNA and P-site-bound deacylated tRNA move to the P and E sites, respectively. Catalyzes the coordinated movement of the two tRNA molecules, the mRNA and conformational changes in the ribosome. The chain is Elongation factor G from Alcanivorax borkumensis (strain ATCC 700651 / DSM 11573 / NCIMB 13689 / SK2).